The following is a 437-amino-acid chain: Argininosuccinate lyase (437 aa).

Belongs to the lyase 1 family. Argininosuccinate lyase subfamily.

The protein resides in the cytoplasm. The enzyme catalyses 2-(N(omega)-L-arginino)succinate = fumarate + L-arginine. The protein operates within amino-acid biosynthesis; L-arginine biosynthesis; L-arginine from L-ornithine and carbamoyl phosphate: step 3/3. The polypeptide is Argininosuccinate lyase (Clostridium novyi (strain NT)).